A 453-amino-acid polypeptide reads, in one-letter code: Wall-associated protein (453 aa).

An N-terminal signal peptide occupies residues methionine 1–alanine 29. The interval glycine 331–threonine 403 is disordered. Over residues glutamate 342–threonine 403 the composition is skewed to low complexity. The LPXTG sorting signal motif lies at leucine 422–glycine 426. At threonine 425 the chain carries Pentaglycyl murein peptidoglycan amidated threonine. The propeptide at glycine 426–arginine 453 is removed by sortase.

Its subcellular location is the secreted. It localises to the cell wall. The polypeptide is Wall-associated protein (wapA) (Streptococcus mutans serotype c (strain ATCC 700610 / UA159)).